Reading from the N-terminus, the 264-residue chain is Fibroblast growth factor 5 (264 aa).

Residues 1 to 20 (MSLSLLFLIFCSHLIHSAWA) form the signal peptide. The segment at 25 to 81 (RLTPEGQPAPPRNPGDSSGSRGRSSATFSSSSASSPVAASPGSQGSGSEHSSFQWSP) is disordered. A compositionally biased stretch (low complexity) spans 38-72 (PGDSSGSRGRSSATFSSSSASSPVAASPGSQGSGS). N-linked (GlcNAc...) asparagine glycosylation occurs at Asn108. A disordered region spans residues 227 to 254 (FTVTVPEKKKPPVKPKVPLSQPRRSPSP).

It belongs to the heparin-binding growth factors family. As to quaternary structure, interacts with FGFR1 and FGFR2. Affinity between fibroblast growth factors (FGFs) and their receptors is increased by heparan sulfate glycosaminoglycans that function as coreceptors.

Its subcellular location is the secreted. In terms of biological role, plays an important role in the regulation of cell proliferation and cell differentiation. Required for normal regulation of the hair growth cycle. Functions as an inhibitor of hair elongation by promoting progression from anagen, the growth phase of the hair follicle, into catagen the apoptosis-induced regression phase. The protein is Fibroblast growth factor 5 (Fgf5) of Mus musculus (Mouse).